Consider the following 337-residue polypeptide: MDTAGPSAPESTRGASWSEAQAARDIVPLPTGVFQVAERLQKRICALCPKDLECSVLYFAQSENIAAHENCLLYSSALVECEDYDPSNNDRNFDVESVKKEIKRGRKLKCTFCGKKGATVGCDLKSCFKNYHFFCAKNDHAVLQADGRTGIYKVFCQQHADPQNDLPSVKPLSGVFHSHYSEQTKPRHACFSGVKRKRGRSKRHHVQPPERMALKKEKDGRHTDAIVKAAFLKKCKEAGLLDALFEEILDKLHLIQERLMDETTAESDYEEIGTSLFDCRLFEDTLVNFQAAIENQIHQSEERRRQLKEEIELLQDLKQTLCSGLQSSSTSDSSLSS.

The segment at lysine 42–leucine 78 adopts a C2HC pre-PHD-type zinc-finger fold. Residues leucine 108–alanine 160 form a PHD-type zinc finger.

Interacts with BRCA1 and RELA.

It localises to the nucleus. Its function is as follows. Positive regulator of Th1-type cytokine gene expression. The sequence is that of PHD finger protein 11 (PHF11) from Bos taurus (Bovine).